The chain runs to 775 residues: MEKFGMNFGGGPSKKDLLETIETQKKQLLQYQARLKDVVRAYKSLLKEKEALEASIKVLSVSHEADVGLAGVQLPGLTFPDSVDDRCSTHSEDSTGTATSLDTAASLTSTKGEFGVEDDRPARGPPPPKSEEASWSESGVSSSSGDGPFAGGEVDKRLHQLKTQLATLTSSLATVTQEKSRMEASYLADKKKMKQDLEDASNKAEEERARLEGELKGLQEQIAETKARLITQQHDRAQEQSDHALMLRELQKLLQEERTQRQDLELRLEETREALAGRAYAAEQMEGFELQTKQLTREVEELKSELQAIRDEKNQPDPRLQELQEEAARLKSHFQAQLQQEMRKTALAEDQLRQQSQVEEQRVAALENQISEVSELLGTYEKAKQKDQLAIQKLKERILQLDLENKTLALAASSRSPLDSHGEESSLDVNVLKDKMEKLKRLLQVAARKSQVTLDVEKLCDLEIMPSSEAADGEKATALYYQQELKQLKEEFERYKMRAQVVLKSKNTKDGNLGKELEAAQEQLAELKEKYISLRLSCEELEHQHQQEADDWKQELARLQQLHRQELERCQLDFRDRTLKLEEELHKQRDRALAVLTEKDLELEQLRSVALASGLPGRRSPVGGGGPGDPADTSSSDSLTQALQLAAANEPTFFLYAEQLARKEVEITSLRKQKHRLEVEVHQLQDRLLEEGERHREEVAALQSHIEKNIRDQSREGANLEYLKNIIYRFLTLPDSLGRQQTLTAILTILHFSPEEKQVIMRLPTSASWWPSGKR.

Residues 13 to 61 (SKKDLLETIETQKKQLLQYQARLKDVVRAYKSLLKEKEALEASIKVLSV) are a coiled coil. Basic and acidic residues predominate over residues 84 to 93 (DDRCSTHSED). Disordered stretches follow at residues 84 to 153 (DDRC…AGGE) and 614 to 639 (GLPG…SDSL). 3 stretches are compositionally biased toward low complexity: residues 94-110 (STGT…LTST), 133-147 (ASWS…SGDG), and 629-638 (DPADTSSSDS). Positions 153–763 (EVDKRLHQLK…PEEKQVIMRL (611 aa)) form a coiled coil. One can recognise a GRIP domain in the interval 713 to 763 (QSREGANLEYLKNIIYRFLTLPDSLGRQQTLTAILTILHFSPEEKQVIMRL).

Its subcellular location is the cytoplasm. The protein resides in the golgi apparatus membrane. In terms of biological role, probably involved in maintaining Golgi structure. This chain is GRIP and coiled-coil domain-containing protein 1 (GCC1), found in Homo sapiens (Human).